The sequence spans 104 residues: Type VII secretion system extracellular protein B (104 aa).

Belongs to the WXG100 family. Homodimer. When mixed with EsxA does not form heterodimers.

The protein localises to the secreted. In terms of biological role, virulence factor that is important for the establishment of infection in the host. EsxB is required for EsxA synthesis as well as secretion. Mediates together with EsxA the release of S.aureus from the host cell. Also inhibits host cytokine production and thus modulates dendritic cell-mediated immunity. This chain is Type VII secretion system extracellular protein B, found in Staphylococcus aureus (strain Mu50 / ATCC 700699).